A 248-amino-acid chain; its full sequence is ATP synthase subunit a, chloroplastic (248 aa).

The next 5 membrane-spanning stretches (helical) occupy residues 35–55 (GQVF…AIAG), 94–114 (IPYI…GALI), 133–153 (INTT…AGLS), 202–222 (VFTL…GLFA), and 224–244 (SIQA…ALEG).

It belongs to the ATPase A chain family. In terms of assembly, F-type ATPases have 2 components, CF(1) - the catalytic core - and CF(0) - the membrane proton channel. CF(1) has five subunits: alpha(3), beta(3), gamma(1), delta(1), epsilon(1). CF(0) has four main subunits: a, b, b' and c.

It is found in the plastid. Its subcellular location is the chloroplast thylakoid membrane. In terms of biological role, key component of the proton channel; it plays a direct role in the translocation of protons across the membrane. This Antithamnion sp. (Red alga) protein is ATP synthase subunit a, chloroplastic.